We begin with the raw amino-acid sequence, 574 residues long: Sorting nexin-33 (574 aa).

Positions 1 to 61 constitute an SH3 domain; the sequence is MALKGRALYD…PASYVEIVRS (61 aa). Residues 68 to 119 are disordered; the sequence is ADYSSSPAGSPGAQVSLYNSPSVASPARSGGGSGFLSNQGSFEEDDDDDWDD. Phosphoserine is present on residues Ser-77 and Ser-92. Residues 109-119 are compositionally biased toward acidic residues; sequence FEEDDDDDWDD. The PX domain occupies 230 to 340; sequence FACSVEDPTK…HFLSCLDDKQ (111 aa). The BAR domain occupies 371–574; the sequence is LQDVEDRVDT…EKTLRMYDNL (204 aa).

This sequence belongs to the sorting nexin family. In terms of assembly, homodimer (via BAR domain). Interacts with ADAM15. Interacts with FASLG. Interacts (via SH3 domain) with DNM1 and DNM2. Interacts with WASL. Interacts with FCHSD1 (via the F-BAR domain). Phosphorylated. In terms of tissue distribution, detected in heart and pancreas.

It is found in the cytoplasm. The protein localises to the cytosol. The protein resides in the membrane. It localises to the cytoplasmic vesicle membrane. Functionally, plays a role in the reorganization of the cytoskeleton, endocytosis and cellular vesicle trafficking via its interactions with membranes, WASL, DNM1 and DNM2. Acts both during interphase and at the end of mitotic cell divisions. Required for efficient progress through mitosis and cytokinesis. Required for normal formation of the cleavage furrow at the end of mitosis. Modulates endocytosis of cell-surface proteins, such as APP and PRNP; this then modulates the secretion of APP and PRNP peptides. Promotes membrane tubulation (in vitro). May promote the formation of macropinosomes. This chain is Sorting nexin-33 (SNX33), found in Homo sapiens (Human).